A 534-amino-acid polypeptide reads, in one-letter code: NAD(P)H-quinone oxidoreductase chain 4 2 (534 aa).

A run of 13 helical transmembrane segments spans residues 6 to 26 (FPWL…IPLL), 38 to 58 (WYSL…FWTS), 93 to 113 (LILL…PVTF), 117 to 137 (FFYF…AVQD), 138 to 158 (LLVF…LLAI), 171 to 191 (FILY…AMAF), 210 to 230 (IGFQ…KLPI), 245 to 265 (TAPV…YALF), 279 to 299 (FAPI…LTSF), 313 to 333 (ISHM…GLSG), 335 to 355 (MLQM…VGAT), 377 to 399 (MFAM…GFVA), and 419 to 439 (VVVI…LLSM).

It belongs to the complex I subunit 4 family.

It is found in the cellular thylakoid membrane. It catalyses the reaction a plastoquinone + NADH + (n+1) H(+)(in) = a plastoquinol + NAD(+) + n H(+)(out). The enzyme catalyses a plastoquinone + NADPH + (n+1) H(+)(in) = a plastoquinol + NADP(+) + n H(+)(out). In terms of biological role, NDH-1 shuttles electrons from NAD(P)H, via FMN and iron-sulfur (Fe-S) centers, to quinones in the respiratory chain. The immediate electron acceptor for the enzyme in this species is believed to be plastoquinone. Couples the redox reaction to proton translocation (for every two electrons transferred, four hydrogen ions are translocated across the cytoplasmic membrane), and thus conserves the redox energy in a proton gradient. The protein is NAD(P)H-quinone oxidoreductase chain 4 2 of Synechococcus elongatus (strain ATCC 33912 / PCC 7942 / FACHB-805) (Anacystis nidulans R2).